The chain runs to 478 residues: 2,5-dioxopentanoate dehydrogenase (478 aa).

NADP(+) is bound by residues 148–149 (WN), 172–175 (KPAT), and 225–226 (GS). Catalysis depends on Glu249, which acts as the Proton acceptor. The active-site Nucleophile is Cys283. Glu379 lines the NADP(+) pocket.

The protein belongs to the aldehyde dehydrogenase family. Homotetramer.

The enzyme catalyses 2,5-dioxopentanoate + NADP(+) + H2O = 2-oxoglutarate + NADPH + 2 H(+). 2,5-dioxopentanoate dehydrogenase involved in the degradation of pentoses such as D-arabinose or D-xylose, a major component of hemicelluloses such as xylan. Catalyzes the fifth reaction in the pentose utilization pathway through dehydratation of 2,5-dioxopentanoate into 2-oxoglutarate. Also shows dehydrogenase activity toward glycolaldehyde and DL-glyceraldehyde. The chain is 2,5-dioxopentanoate dehydrogenase from Saccharolobus solfataricus (strain ATCC 35092 / DSM 1617 / JCM 11322 / P2) (Sulfolobus solfataricus).